A 379-amino-acid chain; its full sequence is UDP-N-acetylglucosamine--N-acetylmuramyl-(pentapeptide) pyrophosphoryl-undecaprenol N-acetylglucosamine transferase (379 aa).

UDP-N-acetyl-alpha-D-glucosamine-binding positions include 17–19 (TGG), N128, R169, S197, and Q298.

Belongs to the glycosyltransferase 28 family. MurG subfamily.

It is found in the cell inner membrane. It carries out the reaction di-trans,octa-cis-undecaprenyl diphospho-N-acetyl-alpha-D-muramoyl-L-alanyl-D-glutamyl-meso-2,6-diaminopimeloyl-D-alanyl-D-alanine + UDP-N-acetyl-alpha-D-glucosamine = di-trans,octa-cis-undecaprenyl diphospho-[N-acetyl-alpha-D-glucosaminyl-(1-&gt;4)]-N-acetyl-alpha-D-muramoyl-L-alanyl-D-glutamyl-meso-2,6-diaminopimeloyl-D-alanyl-D-alanine + UDP + H(+). It participates in cell wall biogenesis; peptidoglycan biosynthesis. Cell wall formation. Catalyzes the transfer of a GlcNAc subunit on undecaprenyl-pyrophosphoryl-MurNAc-pentapeptide (lipid intermediate I) to form undecaprenyl-pyrophosphoryl-MurNAc-(pentapeptide)GlcNAc (lipid intermediate II). The chain is UDP-N-acetylglucosamine--N-acetylmuramyl-(pentapeptide) pyrophosphoryl-undecaprenol N-acetylglucosamine transferase from Brucella canis (strain ATCC 23365 / NCTC 10854 / RM-666).